We begin with the raw amino-acid sequence, 83 residues long: Cytochrome b559 subunit alpha (83 aa).

The chain crosses the membrane as a helical span at residues 21-35 (VIHSITIPSLFIAGW). Position 23 (His23) interacts with heme.

This sequence belongs to the PsbE/PsbF family. In terms of assembly, heterodimer of an alpha subunit and a beta subunit. PSII is composed of 1 copy each of membrane proteins PsbA, PsbB, PsbC, PsbD, PsbE, PsbF, PsbH, PsbI, PsbJ, PsbK, PsbL, PsbM, PsbT, PsbX, PsbY, PsbZ, Psb30/Ycf12, at least 3 peripheral proteins of the oxygen-evolving complex and a large number of cofactors. It forms dimeric complexes. Heme b is required as a cofactor.

The protein resides in the plastid. It is found in the chloroplast thylakoid membrane. Its function is as follows. This b-type cytochrome is tightly associated with the reaction center of photosystem II (PSII). PSII is a light-driven water:plastoquinone oxidoreductase that uses light energy to abstract electrons from H(2)O, generating O(2) and a proton gradient subsequently used for ATP formation. It consists of a core antenna complex that captures photons, and an electron transfer chain that converts photonic excitation into a charge separation. This chain is Cytochrome b559 subunit alpha, found in Psilotum nudum (Whisk fern).